The primary structure comprises 432 residues: D-amino acid dehydrogenase (432 aa).

Residue 3-17 (VLVLGGGVIGVTSAY) participates in FAD binding.

Belongs to the DadA oxidoreductase family. It depends on FAD as a cofactor.

It catalyses the reaction a D-alpha-amino acid + A + H2O = a 2-oxocarboxylate + AH2 + NH4(+). Its pathway is amino-acid degradation; D-alanine degradation; NH(3) and pyruvate from D-alanine: step 1/1. Functionally, oxidative deamination of D-amino acids. The sequence is that of D-amino acid dehydrogenase from Delftia acidovorans (strain DSM 14801 / SPH-1).